A 97-amino-acid chain; its full sequence is Probable lipopolysaccharide assembly protein A (97 aa).

A run of 2 helical transmembrane segments spans residues 1–21 (MIKY…AITI) and 46–66 (VAIL…FFYI). A coiled-coil region spans residues 67–95 (KLKLKNMALARQVKRQTLQINELTTTRDK).

This sequence belongs to the LapA family.

The protein localises to the cell inner membrane. Involved in the assembly of lipopolysaccharide (LPS). The sequence is that of Probable lipopolysaccharide assembly protein A from Haemophilus influenzae (strain ATCC 51907 / DSM 11121 / KW20 / Rd).